Reading from the N-terminus, the 321-residue chain is MKLSEIAEFLSLEYKGEDIEISALNSLLKANFTELTYCDGEKNTKDIPHTGAAAILVSKEYENLVPKDTKALITQSPHLSFAFLSKLFAKPLISTAKEKVQNIAKSARIMPNVYIGDNVNIGENVIIMAGAYIGDNVSIGDESIIHPNVVIYNDTKIGKKCHLLANCVIGSDGFGYAHNKNGEHYKIYHNGNVVLEDFVEVGACTTIDRAVFDSTIIKAGTKVDNLVQIGHNCNIGQNCIIVAQTGISGSSELGRNVIMGGQSATSGHLKIGDFSTIAARGGVSKNLEGGRVYGGFPIMLQKDWLKLQAKIAINFKEKSQD.

Catalysis depends on His231, which acts as the Proton acceptor.

This sequence belongs to the transferase hexapeptide repeat family. LpxD subfamily. In terms of assembly, homotrimer.

It carries out the reaction a UDP-3-O-[(3R)-3-hydroxyacyl]-alpha-D-glucosamine + a (3R)-hydroxyacyl-[ACP] = a UDP-2-N,3-O-bis[(3R)-3-hydroxyacyl]-alpha-D-glucosamine + holo-[ACP] + H(+). The protein operates within bacterial outer membrane biogenesis; LPS lipid A biosynthesis. Its function is as follows. Catalyzes the N-acylation of UDP-3-O-acylglucosamine using 3-hydroxyacyl-ACP as the acyl donor. Is involved in the biosynthesis of lipid A, a phosphorylated glycolipid that anchors the lipopolysaccharide to the outer membrane of the cell. The chain is UDP-3-O-acylglucosamine N-acyltransferase from Campylobacter jejuni subsp. jejuni serotype O:2 (strain ATCC 700819 / NCTC 11168).